A 441-amino-acid chain; its full sequence is Maltokinase (441 aa).

This sequence belongs to the aminoglycoside phosphotransferase family. Monomer.

The enzyme catalyses D-maltose + ATP = alpha-maltose 1-phosphate + ADP + H(+). It participates in glycan biosynthesis; glycogen biosynthesis. Functionally, catalyzes the ATP-dependent phosphorylation of maltose to maltose 1-phosphate. Is involved in a branched alpha-glucan biosynthetic pathway from trehalose, together with TreS, GlgE and GlgB. This chain is Maltokinase (mak), found in Mycolicibacterium vanbaalenii (strain DSM 7251 / JCM 13017 / BCRC 16820 / KCTC 9966 / NRRL B-24157 / PYR-1) (Mycobacterium vanbaalenii).